We begin with the raw amino-acid sequence, 505 residues long: Glucan endo-1,3-beta-glucosidase 2 (505 aa).

A signal peptide spans 1-20; it reads MASLLHLLLLSLSLLVLASA. An N-linked (GlcNAc...) asparagine glycan is attached at Asn-97. The Proton donor role is filled by Glu-125. N-linked (GlcNAc...) asparagine glycosylation is found at Asn-180 and Asn-262. Glu-272 functions as the Nucleophile in the catalytic mechanism. N-linked (GlcNAc...) asparagine glycans are attached at residues Asn-304, Asn-361, and Asn-365. A disulfide bridge connects residues Cys-369 and Cys-432. N-linked (GlcNAc...) asparagine glycosylation is found at Asn-461, Asn-466, and Asn-473. A lipid anchor (GPI-anchor amidated serine) is attached at Ser-477. A propeptide spans 478–505 (removed in mature form); sequence SGIRSDLYYSRGIWSILTVMILNVANIL.

It belongs to the glycosyl hydrolase 17 family. In terms of processing, contains two additional disulfide bonds.

The protein localises to the cell membrane. It catalyses the reaction Hydrolysis of (1-&gt;3)-beta-D-glucosidic linkages in (1-&gt;3)-beta-D-glucans.. This chain is Glucan endo-1,3-beta-glucosidase 2, found in Arabidopsis thaliana (Mouse-ear cress).